We begin with the raw amino-acid sequence, 92 residues long: Small ribosomal subunit protein uS19 (92 aa).

It belongs to the universal ribosomal protein uS19 family.

Its function is as follows. Protein S19 forms a complex with S13 that binds strongly to the 16S ribosomal RNA. In Prochlorococcus marinus (strain MIT 9312), this protein is Small ribosomal subunit protein uS19.